A 364-amino-acid chain; its full sequence is Lipoyl synthase, mitochondrial (364 aa).

[4Fe-4S] cluster is bound by residues cysteine 99, cysteine 104, cysteine 110, cysteine 130, cysteine 134, cysteine 137, and serine 345. The region spanning 116–334 (HSTQTATIML…EQRGNELGFL (219 aa)) is the Radical SAM core domain.

It belongs to the radical SAM superfamily. Lipoyl synthase family. The cofactor is [4Fe-4S] cluster.

It is found in the mitochondrion. The enzyme catalyses [[Fe-S] cluster scaffold protein carrying a second [4Fe-4S](2+) cluster] + N(6)-octanoyl-L-lysyl-[protein] + 2 oxidized [2Fe-2S]-[ferredoxin] + 2 S-adenosyl-L-methionine + 4 H(+) = [[Fe-S] cluster scaffold protein] + N(6)-[(R)-dihydrolipoyl]-L-lysyl-[protein] + 4 Fe(3+) + 2 hydrogen sulfide + 2 5'-deoxyadenosine + 2 L-methionine + 2 reduced [2Fe-2S]-[ferredoxin]. It participates in protein modification; protein lipoylation via endogenous pathway; protein N(6)-(lipoyl)lysine from octanoyl-[acyl-carrier-protein]: step 2/2. In terms of biological role, catalyzes the radical-mediated insertion of two sulfur atoms into the C-6 and C-8 positions of the octanoyl moiety bound to the lipoyl domains of lipoate-dependent enzymes, thereby converting the octanoylated domains into lipoylated derivatives. The chain is Lipoyl synthase, mitochondrial from Drosophila mojavensis (Fruit fly).